The primary structure comprises 616 residues: MALLQISEPGLSAAPHQRRLAAGIDLGTTNSLVATVRSGQAETLADHEGRHLLPSVVHYQQQGHSVGYDARTNAALDTANTISSVKRLMGRSLADIQQRYPHLPYQFQASENGLPMIETAAGLLNPVRVSADILKALAARATEALAGELDGVVITVPAYFDDAQRQGTKDAARLAGLHVLRLLNEPTAAAIAYGLDSGQEGVIAVYDLGGGTFDISILRLSRGVFEVLATGGDSALGGDDFDHLLADYIREQAGIPDRSDNRVQRELLDAAIAAKIALSDADSVTVNVAGWQGEISREQFNELIAPLVKRTLLACRRALKDAGVEADEVLEVVMVGGSTRVPLVRERVGEFFGRPPLTSIDPDKVVAIGAAIQADILVGNKPDSEMLLLDVIPLSLGLETMGGLVEKVIPRNTTIPVARAQDFTTFKDGQTAMSIHVMQGERELVQDCRSLARFALRGIPALPAGGAHIRVTFQVDADGLLSVTAMEKSTGVEASIQVKPSYGLTDSEIASMIKDSMSYAEQDVKARMLAEQKVEAARVLESLHGALAADAALLSAAERQDIDDAAAHLSEVAQGDDVDAIEQAIKNVDKQTQDFAARRMDQSVRRALKGHSVDEV.

Belongs to the heat shock protein 70 family.

Chaperone involved in the maturation of iron-sulfur cluster-containing proteins. Has a low intrinsic ATPase activity which is markedly stimulated by HscB. Involved in the maturation of IscU. The sequence is that of Chaperone protein HscA from Escherichia coli (strain SMS-3-5 / SECEC).